A 419-amino-acid chain; its full sequence is Multifunctional CCA protein (419 aa).

Residues glycine 8 and arginine 11 each coordinate ATP. Residues glycine 8 and arginine 11 each contribute to the CTP site. The Mg(2+) site is built by aspartate 21 and aspartate 23. ATP contacts are provided by arginine 91, arginine 137, and arginine 140. Positions 91, 137, and 140 each coordinate CTP. In terms of domain architecture, HD spans serine 228–tryptophan 334.

It belongs to the tRNA nucleotidyltransferase/poly(A) polymerase family. Bacterial CCA-adding enzyme type 1 subfamily. Monomer. Can also form homodimers and oligomers. It depends on Mg(2+) as a cofactor. The cofactor is Ni(2+).

The enzyme catalyses a tRNA precursor + 2 CTP + ATP = a tRNA with a 3' CCA end + 3 diphosphate. It carries out the reaction a tRNA with a 3' CCA end + 2 CTP + ATP = a tRNA with a 3' CCACCA end + 3 diphosphate. In terms of biological role, catalyzes the addition and repair of the essential 3'-terminal CCA sequence in tRNAs without using a nucleic acid template. Adds these three nucleotides in the order of C, C, and A to the tRNA nucleotide-73, using CTP and ATP as substrates and producing inorganic pyrophosphate. tRNA 3'-terminal CCA addition is required both for tRNA processing and repair. Also involved in tRNA surveillance by mediating tandem CCA addition to generate a CCACCA at the 3' terminus of unstable tRNAs. While stable tRNAs receive only 3'-terminal CCA, unstable tRNAs are marked with CCACCA and rapidly degraded. This chain is Multifunctional CCA protein, found in Mannheimia succiniciproducens (strain KCTC 0769BP / MBEL55E).